A 1768-amino-acid chain; its full sequence is Gag-Pro-Pol polyprotein (1768 aa).

Gly2 carries N-myristoyl glycine; by host lipidation. Residues 101-159 constitute a propeptide that is removed on maturation; it reads AAVTQTEKILKVSSQTDLRDNSHNKDMDLISLESDDEEAKAPSEKMTMSNKSPKKYPAM. The tract at residues 132 to 152 is disordered; it reads LESDDEEAKAPSEKMTMSNKS. The PPXY motif motif lies at 200 to 203; sequence PPPY. Residues 215-251 are a coiled coil; that stretch reads AVVNPKEELKEKISQLEEQIKLEELHQSLIIRLQKLK. The segment at 544-561 adopts a CCHC-type zinc-finger fold; that stretch reads GGCFKCGKKGHFAKDCRD. Residues 589–622 are disordered; sequence KSKTDSQGNPLPPHQGNRDEGPAPGPEASLWGSQ. The region spanning 777–853 is the Peptidase A2 domain; sequence FTGLIDTGAD…LPVNLWGRDL (77 aa). Asp782 (protease; shared with dimeric partner) is an active-site residue. In terms of domain architecture, G-patch spans 864 to 910; sequence PNDIVTAQMLAQGYSPGKGLGKREDGILQPIPNSGQLDRKGFGNFLA. The Reverse transcriptase domain occupies 956–1144; that stretch reads LQAGHIIESN…DPYTYLGFQI (189 aa). Asp1021, Asp1096, Asp1097, Asp1367, Glu1396, Asp1417, and Asp1481 together coordinate Mg(2+). An RNase H type-1 domain is found at 1358–1489; sequence LDNALLVFTD…TDLATKVVAT (132 aa). An Integrase-type zinc finger spans residues 1493-1534; sequence TNLTEAQTAHALHHLNAQSLRLMFKITREQARQIVKQCPTCV. Zn(2+) is bound by residues His1502, His1506, Cys1530, and Cys1533. Positions 1547 to 1708 constitute an Integrase catalytic domain; sequence KGLVPNMLWQ…AADRFWHTSS (162 aa). Mg(2+) contacts are provided by Asp1558, Asp1615, and Glu1651. The integrase-type DNA-binding region spans 1713 to 1762; it reads AMVKWKDPLDNTWHGPDPVLIWGRGSVCVYSQTHDAARWLPERLVRQVSN.

Belongs to the retroviral Pol polyprotein family. In terms of assembly, homodimer. As to quaternary structure, interacts with the G-patch peptide. Interacts with the reverse transcriptase/ribonuclease H. In terms of assembly, homotrimer. The cofactor is Mg(2+). In terms of processing, released by autocatalytic processing. The protease can undergo further autoprocessing to yield 2 shorter but enzymatically active forms of 12 kDa and 13 kDa. Myristoylated. Myristoylation of the matrix (MA) domain mediates the transport and binding of Gag polyproteins to the host plasma membrane and is required for the assembly of viral particles. Post-translationally, specific enzymatic cleavages in vivo yield mature proteins.

The protein resides in the virion. It catalyses the reaction DNA(n) + a 2'-deoxyribonucleoside 5'-triphosphate = DNA(n+1) + diphosphate. The catalysed reaction is Endonucleolytic cleavage to 5'-phosphomonoester.. It carries out the reaction dUTP + H2O = dUMP + diphosphate + H(+). In terms of biological role, matrix protein. Functionally, nucleocapsid protein p14: Nucleocapsid protein. Capsid protein. Its function is as follows. The aspartyl protease mediates proteolytic cleavages of Gag and Gag-Pol polyproteins during or shortly after the release of the virion from the plasma membrane. Cleavages take place as an ordered, step-wise cascade to yield mature proteins. This process is called maturation. Displays maximal activity during the budding process just prior to particle release from the cell. In terms of biological role, enhances the activity of the reverse transcriptase. May be part of the mature RT. Functionally, RT is a multifunctional enzyme that converts the viral dimeric RNA genome into dsDNA in the cytoplasm, shortly after virus entry into the cell. This enzyme displays a DNA polymerase activity that can copy either DNA or RNA templates, and a ribonuclease H (RNase H) activity that cleaves the RNA strand of RNA-DNA heteroduplexes in a partially processive 3' to 5' endonucleasic mode. Conversion of viral genomic RNA into dsDNA requires many steps. A tRNA binds to the primer-binding site (PBS) situated at the 5' end of the viral RNA. RT uses the 3' end of the tRNA primer to perfom a short round of RNA-dependent minus-strand DNA synthesis. The reading proceeds through the U5 region and ends after the repeated (R) region which is present at both ends of viral RNA. The portion of the RNA-DNA heteroduplex is digested by the RNase H, resulting in a ssDNA product attached to the tRNA primer. This ssDNA/tRNA hybridizes with the identical R region situated at the 3' end of viral RNA. This template exchange, known as minus-strand DNA strong stop transfer, can be either intra- or intermolecular. RT uses the 3' end of this newly synthesized short ssDNA to perfom the RNA-dependent minus-strand DNA synthesis of the whole template. RNase H digests the RNA template except for a polypurine tract (PPT) situated at the 5' end of the genome. It is not clear if both polymerase and RNase H activities are simultaneous. RNase H probably can proceed both in a polymerase-dependent (RNA cut into small fragments by the same RT performing DNA synthesis) and a polymerase-independent mode (cleavage of remaining RNA fragments by free RTs). Secondly, RT performs DNA-directed plus-strand DNA synthesis using the PPT that has not been removed by RNase H as primers. PPT and tRNA primers are then removed by RNase H. The 3' and 5' ssDNA PBS regions hybridize to form a circular dsDNA intermediate. Strand displacement synthesis by RT to the PBS and PPT ends produces a blunt ended, linear dsDNA copy of the viral genome that includes long terminal repeats (LTRs) at both ends. Catalyzes viral DNA integration into the host chromosome, by performing a series of DNA cutting and joining reactions. The sequence is that of Gag-Pro-Pol polyprotein (pol) from Macaca mulatta (Rhesus macaque).